A 416-amino-acid chain; its full sequence is Beta sliding clamp (416 aa).

Belongs to the beta sliding clamp family. In terms of assembly, forms a ring-shaped head-to-tail homodimer around DNA which binds and tethers DNA polymerases and other proteins to the DNA. The DNA replisome complex has a single clamp-loading complex (3 tau and 1 each of delta, delta', psi and chi subunits) which binds 3 Pol III cores (1 core on the leading strand and 2 on the lagging strand) each with a beta sliding clamp dimer. Additional proteins in the replisome are other copies of gamma, psi and chi, Ssb, DNA helicase and RNA primase.

The protein resides in the cytoplasm. In terms of biological role, confers DNA tethering and processivity to DNA polymerases and other proteins. Acts as a clamp, forming a ring around DNA (a reaction catalyzed by the clamp-loading complex) which diffuses in an ATP-independent manner freely and bidirectionally along dsDNA. Initially characterized for its ability to contact the catalytic subunit of DNA polymerase III (Pol III), a complex, multichain enzyme responsible for most of the replicative synthesis in bacteria; Pol III exhibits 3'-5' exonuclease proofreading activity. The beta chain is required for initiation of replication as well as for processivity of DNA replication. The chain is Beta sliding clamp (dnaN) from Chlamydia trachomatis serovar D (strain ATCC VR-885 / DSM 19411 / UW-3/Cx).